A 465-amino-acid chain; its full sequence is A-type ATP synthase subunit B (465 aa).

This sequence belongs to the ATPase alpha/beta chains family. As to quaternary structure, has multiple subunits with at least A(3), B(3), C, D, E, F, H, I and proteolipid K(x).

Its subcellular location is the cell membrane. Component of the A-type ATP synthase that produces ATP from ADP in the presence of a proton gradient across the membrane. The B chain is a regulatory subunit. In Pyrococcus horikoshii (strain ATCC 700860 / DSM 12428 / JCM 9974 / NBRC 100139 / OT-3), this protein is A-type ATP synthase subunit B.